A 671-amino-acid chain; its full sequence is cGMP-dependent protein kinase 1 (671 aa).

N-acetylserine is present on Ser-2. Residues 2–59 (SELEEDFAKILMLKEERIKELEKRLSEKEEEIQELKRKLHKCQSVLPVPSTHIGPRTT) adopt a coiled-coil conformation. Residues 2–102 (SELEEDFAKI…LIKEAILDND (101 aa)) are required for dimerization. A leucine-zipper region spans residues 9–44 (AKILMLKEERIKELEKRLSEKEEEIQELKRKLHKCQ). Residues 50-75 (PSTHIGPRTTRAQGISAEPQTYRSFH) form an autoinhibitory domain region. Thr-59 carries the phosphothreonine; by autocatalysis modification. Residues 103–220 (FMKNLELSQI…EYMEFLKSVP (118 aa)) are cGMP-binding, high affinity. Residues 167–170 (GELA), 177–178 (RT), Arg-282, 291–294 (GEKA), 301–302 (RT), and Tyr-336 each bind 3',5'-cyclic GMP. The cGMP-binding, low affinity stretch occupies residues 221-341 (TFQSLPEEIL…SNKAYEDAEA (121 aa)). The Protein kinase domain maps to 360–619 (FNIIDTLGVG…VKDIQKHKWF (260 aa)). ATP contacts are provided by residues 366 to 374 (LGVGGFGRV) and Lys-390. Catalysis depends on Asp-484, which acts as the Proton acceptor. Thr-515 is modified (phosphothreonine). The 52-residue stretch at 620 to 671 (EGFNWEGLRKGTLTPPIIPSVASPTDTSNFDGFPEDNDEPPPDDNSGWDIDF) folds into the AGC-kinase C-terminal domain. The interval 635–671 (PIIPSVASPTDTSNFDGFPEDNDEPPPDDNSGWDIDF) is disordered. Residues 652-661 (FPEDNDEPPP) are compositionally biased toward acidic residues.

The protein belongs to the protein kinase superfamily. AGC Ser/Thr protein kinase family. cGMP subfamily. In terms of assembly, isoform alpha: parallel homodimer or heterodimer and also heterotetramer. Interacts directly with PPP1R12A. Non-covalent dimer of dimer of PRKG1-PRKG1 and PPP1R12A-PPP1R12A. This interaction targets PRKG1 to stress fibers to mediate smooth muscle cell relaxation and vasodilation in responses to rises in cGMP. Isoform beta: antiparallel homodimer. Part of cGMP kinase signaling complex at least composed of ACTA2/alpha-actin, CNN1/calponin H1, PLN/phospholamban, PRKG1 and ITPR1. Interacts with IRAG1. Forms a stable complex with ITPR1, IRAG1, and isoform beta of PRKG1. Interacts with TRPC7 (via ankyrin repeat domain). Isoform alpha interacts with RGS2. Interacts with GTF2I. Post-translationally, autophosphorylation increases kinase activity. In terms of processing, 65 kDa monomer is produced by proteolytic cleavage.

It is found in the cytoplasm. The enzyme catalyses L-seryl-[protein] + ATP = O-phospho-L-seryl-[protein] + ADP + H(+). It carries out the reaction L-threonyl-[protein] + ATP = O-phospho-L-threonyl-[protein] + ADP + H(+). With respect to regulation, in the absence of cGMP, PRKG1 activity is suppressed by autoinhibitory contacts. In terms of biological role, serine/threonine protein kinase that acts as a key mediator of the nitric oxide (NO)/cGMP signaling pathway. GMP binding activates PRKG1, which phosphorylates serines and threonines on many cellular proteins. Numerous protein targets for PRKG1 phosphorylation are implicated in modulating cellular calcium, but the contribution of each of these targets may vary substantially among cell types. Proteins that are phosphorylated by PRKG1 regulate platelet activation and adhesion, smooth muscle contraction, cardiac function, gene expression, feedback of the NO-signaling pathway, and other processes involved in several aspects of the CNS like axon guidance, hippocampal and cerebellar learning, circadian rhythm and nociception. Smooth muscle relaxation is mediated through lowering of intracellular free calcium, by desensitization of contractile proteins to calcium, and by decrease in the contractile state of smooth muscle or in platelet activation. Regulates intracellular calcium levels via several pathways: phosphorylates IRAG1 and inhibits IP3-induced Ca(2+) release from intracellular stores, phosphorylation of KCNMA1 (BKCa) channels decreases intracellular Ca(2+) levels, which leads to increased opening of this channel. PRKG1 phosphorylates the canonical transient receptor potential channel (TRPC) family which inactivates the associated inward calcium current. Another mode of action of NO/cGMP/PKGI signaling involves PKGI-mediated inactivation of the Ras homolog gene family member A (RhoA). Phosphorylation of RHOA by PRKG1 blocks the action of this protein in myriad processes: regulation of RHOA translocation; decreasing contraction; controlling vesicle trafficking, reduction of myosin light chain phosphorylation resulting in vasorelaxation. Activation of PRKG1 by NO signaling also alters gene expression in a number of tissues. In smooth muscle cells, increased cGMP and PRKG1 activity influence expression of smooth muscle-specific contractile proteins, levels of proteins in the NO/cGMP signaling pathway, down-regulation of the matrix proteins osteopontin and thrombospondin-1 to limit smooth muscle cell migration and phenotype. Regulates vasodilator-stimulated phosphoprotein (VASP) functions in platelets and smooth muscle. In Oryctolagus cuniculus (Rabbit), this protein is cGMP-dependent protein kinase 1 (PRKG1).